Reading from the N-terminus, the 430-residue chain is Gamma-glutamyl phosphate reductase (430 aa).

It belongs to the gamma-glutamyl phosphate reductase family.

The protein localises to the cytoplasm. The enzyme catalyses L-glutamate 5-semialdehyde + phosphate + NADP(+) = L-glutamyl 5-phosphate + NADPH + H(+). It functions in the pathway amino-acid biosynthesis; L-proline biosynthesis; L-glutamate 5-semialdehyde from L-glutamate: step 2/2. In terms of biological role, catalyzes the NADPH-dependent reduction of L-glutamate 5-phosphate into L-glutamate 5-semialdehyde and phosphate. The product spontaneously undergoes cyclization to form 1-pyrroline-5-carboxylate. This Polaromonas naphthalenivorans (strain CJ2) protein is Gamma-glutamyl phosphate reductase.